Here is a 264-residue protein sequence, read N- to C-terminus: DNA repair protein RecO (264 aa).

It belongs to the RecO family.

Involved in DNA repair and RecF pathway recombination. The chain is DNA repair protein RecO from Chlorobium luteolum (strain DSM 273 / BCRC 81028 / 2530) (Pelodictyon luteolum).